Reading from the N-terminus, the 180-residue chain is uncharacterized protein (180 aa).

The HTH dtxR-type domain occupies 17-80; that stretch reads RRSRILHYLM…LIPNMGVRLT (64 aa).

The protein belongs to the DtxR/MntR family.

This is an uncharacterized protein from Aeropyrum pernix (strain ATCC 700893 / DSM 11879 / JCM 9820 / NBRC 100138 / K1).